We begin with the raw amino-acid sequence, 345 residues long: Ferrochelatase (345 aa).

Positions 215 and 296 each coordinate Fe cation.

The protein belongs to the ferrochelatase family.

The protein localises to the cytoplasm. The catalysed reaction is heme b + 2 H(+) = protoporphyrin IX + Fe(2+). It functions in the pathway porphyrin-containing compound metabolism; protoheme biosynthesis; protoheme from protoporphyrin-IX: step 1/1. Functionally, catalyzes the ferrous insertion into protoporphyrin IX. In Nitrobacter hamburgensis (strain DSM 10229 / NCIMB 13809 / X14), this protein is Ferrochelatase.